We begin with the raw amino-acid sequence, 468 residues long: Na(+)/H(+) antiporter (468 aa).

Helical transmembrane passes span 12-32, 36-56, 81-96, 103-123, 133-153, 169-189, 204-224, and 258-278; these read HLAL…SEVF, LLVG…PHAA, DVRV…GAYF, IIVM…GFAY, GSLL…ALIV, LLIA…YFAI, WVLL…CVIG, and GIGT…GILF. Residue Asn287 is glycosylated (N-linked (GlcNAc...) asparagine). The helical transmembrane segment at 293-313 threads the bilayer; sequence VPAFIDQTFSLLFFTYYGTII. N-linked (GlcNAc...) asparagine glycosylation is present at Asn319. A run of 3 helical transmembrane segments spans residues 320–340, 362–382, and 408–428; these read WSVE…TLVC, ALFV…AFLA, and IIWP…GFSI. Phosphoserine is present on residues Ser449 and Ser451.

The protein belongs to the fungal Na(+)/H(+) exchanger family.

The protein resides in the cell membrane. Functionally, sodium export from cell, takes up external protons in exchange for internal sodium ions. Involved in regulation of pH. In Schizosaccharomyces pombe (strain 972 / ATCC 24843) (Fission yeast), this protein is Na(+)/H(+) antiporter.